A 347-amino-acid polypeptide reads, in one-letter code: Selenide, water dikinase (347 aa).

Residue cysteine 17 is part of the active site. Residues lysine 20 and 48–50 (TRD) contribute to the ATP site. Mg(2+) is bound at residue aspartate 51. ATP is bound by residues aspartate 68, aspartate 91, and 139-141 (GHS). Aspartate 91 contacts Mg(2+). Residue aspartate 227 participates in Mg(2+) binding.

This sequence belongs to the selenophosphate synthase 1 family. Class I subfamily. Homodimer. Requires Mg(2+) as cofactor.

The enzyme catalyses hydrogenselenide + ATP + H2O = selenophosphate + AMP + phosphate + 2 H(+). Its function is as follows. Synthesizes selenophosphate from selenide and ATP. The protein is Selenide, water dikinase of Salmonella typhi.